We begin with the raw amino-acid sequence, 181 residues long: UPF0302 protein lin2035 (181 aa).

Belongs to the UPF0302 family.

The sequence is that of UPF0302 protein lin2035 from Listeria innocua serovar 6a (strain ATCC BAA-680 / CLIP 11262).